We begin with the raw amino-acid sequence, 253 residues long: Ribonuclease HII (253 aa).

One can recognise an RNase H type-2 domain in the interval 70 to 253; that stretch reads NLIAGIDEVG…KSFEPIKSML (184 aa). A divalent metal cation contacts are provided by Asp-76, Glu-77, and Asp-168.

It belongs to the RNase HII family. It depends on Mn(2+) as a cofactor. Requires Mg(2+) as cofactor.

It localises to the cytoplasm. It catalyses the reaction Endonucleolytic cleavage to 5'-phosphomonoester.. Its function is as follows. Endonuclease that specifically degrades the RNA of RNA-DNA hybrids. This chain is Ribonuclease HII, found in Streptococcus agalactiae serotype III (strain NEM316).